Consider the following 522-residue polypeptide: 2-isopropylmalate synthase (522 aa).

In terms of domain architecture, Pyruvate carboxyltransferase spans 5-267; sequence VIIFDTTLRD…ETGINAKEIH (263 aa). Mn(2+)-binding residues include aspartate 14, histidine 202, histidine 204, and asparagine 238. Residues 392 to 522 are regulatory domain; the sequence is QLQQLVVQSD…MQKNRELGGV (131 aa).

This sequence belongs to the alpha-IPM synthase/homocitrate synthase family. LeuA type 1 subfamily. In terms of assembly, homodimer. It depends on Mn(2+) as a cofactor.

Its subcellular location is the cytoplasm. The catalysed reaction is 3-methyl-2-oxobutanoate + acetyl-CoA + H2O = (2S)-2-isopropylmalate + CoA + H(+). Its pathway is amino-acid biosynthesis; L-leucine biosynthesis; L-leucine from 3-methyl-2-oxobutanoate: step 1/4. Its function is as follows. Catalyzes the condensation of the acetyl group of acetyl-CoA with 3-methyl-2-oxobutanoate (2-ketoisovalerate) to form 3-carboxy-3-hydroxy-4-methylpentanoate (2-isopropylmalate). The polypeptide is 2-isopropylmalate synthase (Shewanella baltica (strain OS185)).